We begin with the raw amino-acid sequence, 279 residues long: MSIVSLLGIKVLNNPAKFTDPYEFEITFECLESLKHDLEWKLTYVGSSRSLDHDQELDSILVGPVPVGVNKFVFSADPPSAELIPASELVSVTVILLSCSYDGREFVRVGYYVNNEYDEEELRENPPAKVQVDHIVRNILAEKPRVTRFNIVWDNENEGDLYPPEQPGVDDEEEEDDEEEDDDEDDEDDEDDDQEDGEGEAEEAAEEEEEEEEKTEDNETNLEEEEEDIENSDGDEEEGEEEVGSVDKNEDGNDKKRRKIEGGSTDIESTPKDAARSTN.

Residues 1-143 (MSIVSLLGIK…HIVRNILAEK (143 aa)) are interaction with HIR1. Residues 1 to 155 (MSIVSLLGIK…VTRFNIVWDN (155 aa)) form an interaction with histone H3, histone H4, RAD53 and the RF-C complex region. The tract at residues 156–279 (ENEGDLYPPE…TPKDAARSTN (124 aa)) is disordered. Residues 168-244 (GVDDEEEEDD…DEEEGEEEVG (77 aa)) show a composition bias toward acidic residues. The stretch at 192 to 243 (DDQEDGEGEAEEAAEEEEEEEEKTEDNETNLEEEEEDIENSDGDEEEGEEEV) forms a coiled coil. Basic and acidic residues-rich tracts occupy residues 245 to 254 (SVDKNEDGND) and 269 to 279 (STPKDAARSTN).

This sequence belongs to the ASF1 family. In terms of assembly, interacts with histone H3/H4 heterodimers via both histone H3 and histone H4. Binds with higher affinity to H3/H4 heterodimers where histone H3 has been pre-acetylated on 'Lys-14'. Interacts with RAD53 and this may impair interaction with histones and chromatin assembly; the interaction is reduced upon activation of DNA damage or replication checkpoints which in turn promotes histone binding and chromatin assembly. Interacts with the CAC2 subunit of chromatin assembly factor 1 (CAF-1). Interacts with the HIR1, HIR2, HIR3 and HPC2 subunits of the HIR complex. Interacts with the RFC1, RFC2, RFC3, RFC4 and RFC5 subunits of the replication factor C (RF-C/RFC) complex; which may recruit this protein to DNA. Interacts with the SAS2, SAS4 and SAS5 subunits of the SAS/SAS-I complex. Interacts with the BDF1, BDF2, SPT15, TAF1 and TAF7 subunits of the TFIID complex. Interacts with RTT109 and VPS75; the interaction with RTT109 is direct.

The protein resides in the nucleus. Histone chaperone that facilitates histone deposition and histone exchange and removal during nucleosome assembly and disassembly. Facilitates histone deposition through both replication-dependent and replication-independent chromatin assembly pathways. Cooperates with chromatin assembly factor 1 (CAF-1) to promote replication-dependent chromatin assembly and with the HIR complex to promote replication-independent chromatin assembly, which may occur during transcription and DNA repair. May be required for the maintenance of a subset of replication elongation factors, including DNA polymerase epsilon, the RFC complex and PCNA, at stalled replication forks. Also required for RTT109-dependent acetylation of histone H3 on 'Lys-9' and 'Lys-56'. Promotion of RTT109-mediated histone H3 'Lys-56' acetylation is dependent on interactions with histone H3 pre-acetylated on 'Lys-14'. This is Histone chaperone ASF1 from Saccharomyces cerevisiae (strain ATCC 204508 / S288c) (Baker's yeast).